We begin with the raw amino-acid sequence, 451 residues long: Proline--tRNA ligase (451 aa).

It belongs to the class-II aminoacyl-tRNA synthetase family. ProS type 2 subfamily. Homodimer.

The protein resides in the cytoplasm. The enzyme catalyses tRNA(Pro) + L-proline + ATP = L-prolyl-tRNA(Pro) + AMP + diphosphate. Functionally, catalyzes the attachment of proline to tRNA(Pro) in a two-step reaction: proline is first activated by ATP to form Pro-AMP and then transferred to the acceptor end of tRNA(Pro). This is Proline--tRNA ligase from Roseobacter denitrificans (strain ATCC 33942 / OCh 114) (Erythrobacter sp. (strain OCh 114)).